The following is a 379-amino-acid chain: ATPase ASNA1 homolog (379 aa).

The segment at Met-1–Tyr-20 is disordered. A compositionally biased stretch (low complexity) spans Asn-7–Asp-18. Residue Lys-46–Thr-53 coordinates ATP. Asp-75 is an active-site residue. ATP-binding residues include Glu-246 and Asn-273.

Belongs to the arsA ATPase family. Homodimer.

The protein localises to the cytoplasm. It localises to the endoplasmic reticulum. ATPase required for the post-translational delivery of tail-anchored (TA) proteins to the endoplasmic reticulum. Recognizes and selectively binds the transmembrane domain of TA proteins in the cytosol. This complex then targets to the endoplasmic reticulum by membrane-bound receptors, where the tail-anchored protein is released for insertion. This process is regulated by ATP binding and hydrolysis. ATP binding drives the homodimer towards the closed dimer state, facilitating recognition of newly synthesized TA membrane proteins. ATP hydrolysis is required for insertion. Subsequently, the homodimer reverts towards the open dimer state, lowering its affinity for the membrane-bound receptor, and returning it to the cytosol to initiate a new round of targeting. This is ATPase ASNA1 homolog from Plasmodium falciparum (isolate 3D7).